A 786-amino-acid chain; its full sequence is Elastin (786 aa).

The N-terminal stretch at 1-26 (MAGLTAAAPRPGVLLLLLSILHPSRP) is a signal peptide. A Hydroxyproline modification is found at Pro34. 3 positions are modified to hydroxyproline; partial: Pro65, Pro67, and Pro88. 2 positions are modified to allysine: Lys104 and Lys107. Pro116 is modified (4-hydroxyproline; partial). 4 positions are modified to hydroxyproline; partial: Pro156, Pro167, Pro170, and Pro177. Position 190 is a 4-hydroxyproline; partial (Pro190). Allysine is present on residues Lys241, Lys261, and Lys265. A 4-hydroxyproline; partial mark is found at Pro283 and Pro286. A Hydroxyproline; partial modification is found at Pro290. An allysine mark is found at Lys312 and Lys315. Residues Pro327, Pro342, and Pro347 each carry the 4-hydroxyproline; partial modification. Residues Pro352 and Pro355 each carry the hydroxyproline; partial modification. Residue Pro360 is modified to 4-hydroxyproline; partial. Allysine is present on residues Lys375, Lys379, and Lys382. Pro415 carries the 4-hydroxyproline; partial modification. At Pro421 the chain carries Hydroxyproline; partial. Position 427 is a 4-hydroxyproline; partial (Pro427). Lys448 and Lys451 each carry allysine. Hydroxyproline; partial is present on Pro465. Pro481 carries the 4-hydroxyproline; partial modification. An allysine mark is found at Lys492 and Lys496. A hydroxyproline; partial mark is found at Pro522 and Pro550. Residues Lys558, Lys562, and Lys566 each carry the allysine modification. Pro580 is modified (4-hydroxyproline; partial). Pro589 and Pro598 each carry 4-hydroxyproline. The residue at position 607 (Pro607) is a 4-hydroxyproline; partial. Residues 615–645 (EGVRRSLSPELREGDPSSSQHLPSTPSSPRV) are disordered. A compositionally biased stretch (low complexity) spans 630–645 (PSSSQHLPSTPSSPRV). Position 646 is a hydroxyproline; partial (Pro646). Residues Lys653 and Lys656 each carry the allysine modification. 4-hydroxyproline; partial is present on Pro677. Lys693, Lys697, Lys735, and Lys738 each carry allysine. 2 positions are modified to hydroxyproline; partial: Pro769 and Pro772. Cys776 and Cys781 are oxidised to a cystine.

Belongs to the elastin family. The polymeric elastin chains are cross-linked together into an extensible 3D network. Forms a ternary complex with BGN and MFAP2. Interacts with MFAP2 via divalent cations (calcium &gt; magnesium &gt; manganese) in a dose-dependent and saturating manner. Interacts with FBLN5. Interacts with FBN1. Forms a ternary complex with FBN1 and FBLN2 or FBLN5. Interacts with MFAP4 in a Ca (2+)-dependent manner; this interaction promotes ELN self-assembly. Interacts with EFEMP2 with moderate affinity. In terms of processing, elastin is formed through the cross-linking of its soluble precursor tropoelastin. Cross-linking is initiated through the action of lysyl oxidase on exposed lysines to form allysine. Subsequent spontaneous condensation reactions with other allysine or unmodified lysine residues result in various bi-, tri-, and tetrafunctional cross-links. The most abundant cross-links in mature elastin fibers are lysinonorleucine, allysine aldol, desmosine, and isodesmosine. Hydroxylation on proline residues within the sequence motif, GXPG, is most likely 4-hydroxy as this fits the requirement for 4-hydroxylation in vertebrates. As to expression, expressed within the outer myometrial smooth muscle and throughout the arteriolar tree of uterus (at protein level). Also expressed in the large arteries, lung and skin.

The protein resides in the secreted. It is found in the extracellular space. It localises to the extracellular matrix. In terms of biological role, major structural protein of tissues such as aorta and nuchal ligament, which must expand rapidly and recover completely. Molecular determinant of the late arterial morphogenesis, stabilizing arterial structure by regulating proliferation and organization of vascular smooth muscle. The protein is Elastin (ELN) of Homo sapiens (Human).